The sequence spans 181 residues: MSSVIASRRYASALLSAAEEGGFLDQATQELAQIKIVLDQSRELVHVLRSPVINADKKTHILQEVFADTVGDKVMIFLKLIAKKKRSGMLPQIIVEYQKLLDEANGIINVSITSATPMSDDQVKALVAKLSSYTGKTIREKMALNGELLGGVTVKIGDTILDGSVRHQLQLLKKALVSERV.

The protein belongs to the ATPase delta chain family. In terms of assembly, F-type ATPases have 2 components, F(1) - the catalytic core - and F(0) - the membrane proton channel. F(1) has five subunits: alpha(3), beta(3), gamma(1), delta(1), epsilon(1). F(0) has three main subunits: a(1), b(2) and c(10-14). The alpha and beta chains form an alternating ring which encloses part of the gamma chain. F(1) is attached to F(0) by a central stalk formed by the gamma and epsilon chains, while a peripheral stalk is formed by the delta and b chains.

It localises to the cell inner membrane. Its function is as follows. F(1)F(0) ATP synthase produces ATP from ADP in the presence of a proton or sodium gradient. F-type ATPases consist of two structural domains, F(1) containing the extramembraneous catalytic core and F(0) containing the membrane proton channel, linked together by a central stalk and a peripheral stalk. During catalysis, ATP synthesis in the catalytic domain of F(1) is coupled via a rotary mechanism of the central stalk subunits to proton translocation. Functionally, this protein is part of the stalk that links CF(0) to CF(1). It either transmits conformational changes from CF(0) to CF(1) or is implicated in proton conduction. The chain is ATP synthase subunit delta from Chlorobium phaeobacteroides (strain DSM 266 / SMG 266 / 2430).